We begin with the raw amino-acid sequence, 97 residues long: Protein GLUTAMINE DUMPER 7 (97 aa).

The Extracellular portion of the chain corresponds to 1–25 (MSLHRDSMVPVNSRLENMDSPILSK). A helical transmembrane segment spans residues 26–46 (ICAWGVMLGLFALSLFAMAYA). Residues 47 to 97 (CYHKQTSNSCIEEKQGKKQVLKPLDMEPKIVVIMAGNENPTFFAKPTQINA) are Cytoplasmic-facing. A VIMAG motif is present at residues 78-82 (VIMAG).

It belongs to the GLUTAMINE DUMPER 1 (TC 9.B.60) family. As to expression, expressed in the vascular tissues, even in the minor veins of the leaves.

Its subcellular location is the membrane. In terms of biological role, probable subunit of an amino acid transporter involved in the regulation of the amino acid metabolism. Stimulates amino acid export by activating nonselective amino acid facilitators. The polypeptide is Protein GLUTAMINE DUMPER 7 (GDU7) (Arabidopsis thaliana (Mouse-ear cress)).